The chain runs to 258 residues: 4-hydroxy-tetrahydrodipicolinate reductase (258 aa).

NAD(+) contacts are provided by residues 8–13 (GGSGKM), 86–88 (GTT), and 110–113 (ATNM). H142 serves as the catalytic Proton donor/acceptor. (S)-2,3,4,5-tetrahydrodipicolinate is bound at residue H143. The active-site Proton donor is K146. 152–153 (GT) is a (S)-2,3,4,5-tetrahydrodipicolinate binding site.

This sequence belongs to the DapB family.

It localises to the cytoplasm. It carries out the reaction (S)-2,3,4,5-tetrahydrodipicolinate + NAD(+) + H2O = (2S,4S)-4-hydroxy-2,3,4,5-tetrahydrodipicolinate + NADH + H(+). The enzyme catalyses (S)-2,3,4,5-tetrahydrodipicolinate + NADP(+) + H2O = (2S,4S)-4-hydroxy-2,3,4,5-tetrahydrodipicolinate + NADPH + H(+). It functions in the pathway amino-acid biosynthesis; L-lysine biosynthesis via DAP pathway; (S)-tetrahydrodipicolinate from L-aspartate: step 4/4. Its function is as follows. Catalyzes the conversion of 4-hydroxy-tetrahydrodipicolinate (HTPA) to tetrahydrodipicolinate. This Campylobacter hominis (strain ATCC BAA-381 / DSM 21671 / CCUG 45161 / LMG 19568 / NCTC 13146 / CH001A) protein is 4-hydroxy-tetrahydrodipicolinate reductase.